Consider the following 845-residue polypeptide: Translation initiation factor IF-2 (845 aa).

Disordered stretches follow at residues 45–91 and 127–209; these read RRKI…SNLS and EESL…TPKV. A compositionally biased stretch (polar residues) spans 81 to 91; that stretch reads SESSMAKSNLS. Basic and acidic residues predominate over residues 137-149; the sequence is TEIHQEEQKEEKN. The span at 151–162 shows a compositional bias: polar residues; it reads PVQTSPLSSAHS. Residues 179–193 show a composition bias toward basic and acidic residues; sequence TEKRKADEIKNDDRH. The 170-residue stretch at 343-512 folds into the tr-type G domain; it reads PRPPVVTIMG…LLQAELLDLK (170 aa). The G1 stretch occupies residues 352–359; it reads GHVDHGKT. 352–359 is a GTP binding site; sequence GHVDHGKT. The segment at 377-381 is G2; sequence GITQH. The tract at residues 398–401 is G3; sequence DTPG. GTP contacts are provided by residues 398 to 402 and 452 to 455; these read DTPGH and NKID. Residues 452–455 are G4; the sequence is NKID. Residues 488-490 form a G5 region; it reads SAK.

This sequence belongs to the TRAFAC class translation factor GTPase superfamily. Classic translation factor GTPase family. IF-2 subfamily.

It localises to the cytoplasm. One of the essential components for the initiation of protein synthesis. Protects formylmethionyl-tRNA from spontaneous hydrolysis and promotes its binding to the 30S ribosomal subunits. Also involved in the hydrolysis of GTP during the formation of the 70S ribosomal complex. This chain is Translation initiation factor IF-2, found in Bartonella quintana (strain Toulouse) (Rochalimaea quintana).